The primary structure comprises 139 residues: Ribulose bisphosphate carboxylase small subunit (139 aa).

It belongs to the RuBisCO small chain family. As to quaternary structure, heterohexadecamer of 8 large and 8 small subunits.

The protein localises to the plastid. It is found in the chloroplast. RuBisCO catalyzes two reactions: the carboxylation of D-ribulose 1,5-bisphosphate, the primary event in carbon dioxide fixation, as well as the oxidative fragmentation of the pentose substrate in the photorespiration process. Both reactions occur simultaneously and in competition at the same active site. Although the small subunit is not catalytic it is essential for maximal activity. The sequence is that of Ribulose bisphosphate carboxylase small subunit from Olisthodiscus luteus (Marine phytoflagellate).